Consider the following 160-residue polypeptide: Transcriptional repressor NrdR (160 aa).

The segment at 3-34 (CPYCQYEDTQVKDSRPSEEGTVIRRRRICSVC) is a zinc-finger region. The region spanning 49–139 (LLVLKKSGRY…VYRDFRNASD (91 aa)) is the ATP-cone domain.

This sequence belongs to the NrdR family. Zn(2+) serves as cofactor.

Its function is as follows. Negatively regulates transcription of bacterial ribonucleotide reductase nrd genes and operons by binding to NrdR-boxes. In Bartonella henselae (strain ATCC 49882 / DSM 28221 / CCUG 30454 / Houston 1) (Rochalimaea henselae), this protein is Transcriptional repressor NrdR.